Reading from the N-terminus, the 289-residue chain is ATP synthase gamma chain (289 aa).

This sequence belongs to the ATPase gamma chain family. F-type ATPases have 2 components, CF(1) - the catalytic core - and CF(0) - the membrane proton channel. CF(1) has five subunits: alpha(3), beta(3), gamma(1), delta(1), epsilon(1). CF(0) has three main subunits: a, b and c.

It localises to the cell inner membrane. In terms of biological role, produces ATP from ADP in the presence of a proton gradient across the membrane. The gamma chain is believed to be important in regulating ATPase activity and the flow of protons through the CF(0) complex. The sequence is that of ATP synthase gamma chain from Janthinobacterium sp. (strain Marseille) (Minibacterium massiliensis).